The chain runs to 302 residues: Monopolin complex subunit MAM1 (302 aa).

Disordered stretches follow at residues 53–83 (YHKEHSVKPKQNSGNVAAKEDKDTQHLQNNV) and 257–276 (TSENPFSSSPNTKKIKSKGK). Residues 257-268 (TSENPFSSSPNT) are compositionally biased toward polar residues.

In terms of assembly, component of the monopolin complex composed of at least CSM1, LRS4 and MAM1. The complex associates with the kinetochore during late pachytene. Phosphorylated by CDC5. This phosphorylation is required for the location to the kinetochores during late pachytene.

The protein resides in the nucleus. Component of the monopolin complex which promotes monoorientation during meiosis I, required for chromosome segregation during meiosis. The sequence is that of Monopolin complex subunit MAM1 (MAM1) from Saccharomyces cerevisiae (strain ATCC 204508 / S288c) (Baker's yeast).